The following is a 978-amino-acid chain: Xylanolytic transcriptional activator xlnR (978 aa).

Disordered stretches follow at residues 1–39 (MSTTSVQHFAPSYPPFSSGLSSNRMAQSQTPGLDTLAEG) and 53–116 (AAAG…RDPL). The span at 18 to 32 (SGLSSNRMAQSQTPG) shows a compositional bias: polar residues. A compositionally biased stretch (low complexity) spans 53 to 69 (AAAGDTTATAASGPSDP). Over residues 71 to 82 (SKSKDPYDFDHH) the composition is skewed to basic and acidic residues. A compositionally biased stretch (basic residues) spans 83–93 (NHNHHNHHNNN). The segment covering 94-103 (HHPNSNSNNS) has biased composition (low complexity). Residues 140 to 166 (CDQCNQLRTRCDGQNPCAHCIEFGLTC) constitute a DNA-binding region (zn(2)-C6 fungal-type). 3 disordered regions span residues 179–223 (SKKD…ELNG), 238–293 (SAQP…PIPV), and 588–629 (ELPP…PGNT). The span at 184-193 (AAAAAAATAT) shows a compositional bias: low complexity. Positions 214–223 (PPDRRQELNG) are enriched in basic and acidic residues.

This sequence belongs to the xlnR/xlr1 family.

Its subcellular location is the nucleus. In terms of biological role, transcriptional activator of the xylanolytic system. Involved in the regulation of extracellular cellulolytic and xylanolytic genes and in the regulation of the intracellular activities of D-xylose catabolic genes in the pentose catabolic pathway (PCP) in response to the presence of D-xylose. This Aspergillus clavatus (strain ATCC 1007 / CBS 513.65 / DSM 816 / NCTC 3887 / NRRL 1 / QM 1276 / 107) protein is Xylanolytic transcriptional activator xlnR (xlnR).